The following is an 88-amino-acid chain: RNA-binding protein Hfq (88 aa).

The region spanning 9–68 (DPFLNALRRERIPVSIYLVNGIKLQGQIESFDQFVILLKNTVNQMVYKHAISTVVPARAV) is the Sm domain. The interval 66-88 (RAVSHHSASDRPQGERPQEKTEE) is disordered. Residues 72–88 (SASDRPQGERPQEKTEE) are compositionally biased toward basic and acidic residues.

This sequence belongs to the Hfq family. In terms of assembly, homohexamer.

RNA chaperone that binds small regulatory RNA (sRNAs) and mRNAs to facilitate mRNA translational regulation in response to envelope stress, environmental stress and changes in metabolite concentrations. Also binds with high specificity to tRNAs. This chain is RNA-binding protein Hfq, found in Aliivibrio fischeri (strain ATCC 700601 / ES114) (Vibrio fischeri).